The following is a 73-amino-acid chain: Sec-independent protein translocase protein TatA (73 aa).

Residues 1–21 (MGSFSIGHWLIVLAIIVLLFG) form a helical membrane-spanning segment. The tract at residues 43–73 (MEDTTPEKSEKVEHKEESATSQKIEETTKNA) is disordered.

It belongs to the TatA/E family. In terms of assembly, the Tat system comprises two distinct complexes: a TatABC complex, containing multiple copies of TatA, TatB and TatC subunits, and a separate TatA complex, containing only TatA subunits. Substrates initially bind to the TatABC complex, which probably triggers association of the separate TatA complex to form the active translocon.

The protein localises to the cell inner membrane. In terms of biological role, part of the twin-arginine translocation (Tat) system that transports large folded proteins containing a characteristic twin-arginine motif in their signal peptide across membranes. TatA could form the protein-conducting channel of the Tat system. The chain is Sec-independent protein translocase protein TatA from Campylobacter concisus (strain 13826).